The primary structure comprises 565 residues: 4-coumarate--CoA ligase-like 2 (565 aa).

ATP is bound by residues S221, S222, G223, T224, T225, and K229. (E)-4-coumaroyl-AMP is bound at residue F265. K286 provides a ligand contact to CoA. The segment at 288-359 (DMAKLLSAVE…ENYPKVKILQ (72 aa)) is SBD1. G337, Q359, G360, and T364 together coordinate (E)-4-coumaroyl-AMP. The ATP site is built by Q359, G360, T364, D445, and R460. The segment at 360–424 (GYGLTESTAI…IRSPTVMKGY (65 aa)) is SBD2. Residues K462 and K466 each contribute to the (E)-4-coumaroyl-AMP site. G469 serves as a coordination point for CoA. Residue K551 participates in ATP binding. Positions 563 to 565 (SKL) match the Microbody targeting signal motif.

This sequence belongs to the ATP-dependent AMP-binding enzyme family. It depends on Mg(2+) as a cofactor.

The protein resides in the peroxisome. It carries out the reaction (E)-4-coumarate + ATP + CoA = (E)-4-coumaroyl-CoA + AMP + diphosphate. It catalyses the reaction (E)-4-coumarate + ATP + H(+) = (E)-4-coumaroyl-AMP + diphosphate. The enzyme catalyses (E)-4-coumaroyl-AMP + CoA = (E)-4-coumaroyl-CoA + AMP + H(+). Carboxylate--CoA ligase that may use 4-coumarate as substrate. Follows a two-step reaction mechanism, wherein the carboxylate substrate first undergoes adenylation by ATP, followed by a thioesterification in the presence of CoA to yield the final CoA thioester. The protein is 4-coumarate--CoA ligase-like 2 of Arabidopsis thaliana (Mouse-ear cress).